A 546-amino-acid polypeptide reads, in one-letter code: Chaperonin GroEL 1 (546 aa).

ATP contacts are provided by residues T30–P33, K51, D87–T91, G415, and D495. Positions D527–F546 are disordered. Residues G535–F546 show a composition bias toward gly residues.

It belongs to the chaperonin (HSP60) family. As to quaternary structure, forms a cylinder of 14 subunits composed of two heptameric rings stacked back-to-back. Interacts with the co-chaperonin GroES.

It is found in the cytoplasm. The enzyme catalyses ATP + H2O + a folded polypeptide = ADP + phosphate + an unfolded polypeptide.. Functionally, together with its co-chaperonin GroES, plays an essential role in assisting protein folding. The GroEL-GroES system forms a nano-cage that allows encapsulation of the non-native substrate proteins and provides a physical environment optimized to promote and accelerate protein folding. The polypeptide is Chaperonin GroEL 1 (Burkholderia lata (strain ATCC 17760 / DSM 23089 / LMG 22485 / NCIMB 9086 / R18194 / 383)).